Consider the following 236-residue polypeptide: Phosphoribosylaminoimidazole-succinocarboxamide synthase (236 aa).

The protein belongs to the SAICAR synthetase family.

The enzyme catalyses 5-amino-1-(5-phospho-D-ribosyl)imidazole-4-carboxylate + L-aspartate + ATP = (2S)-2-[5-amino-1-(5-phospho-beta-D-ribosyl)imidazole-4-carboxamido]succinate + ADP + phosphate + 2 H(+). The protein operates within purine metabolism; IMP biosynthesis via de novo pathway; 5-amino-1-(5-phospho-D-ribosyl)imidazole-4-carboxamide from 5-amino-1-(5-phospho-D-ribosyl)imidazole-4-carboxylate: step 1/2. In Hahella chejuensis (strain KCTC 2396), this protein is Phosphoribosylaminoimidazole-succinocarboxamide synthase.